Reading from the N-terminus, the 35-residue chain is Conotoxin Cal6.1g (35 aa).

A propeptide spanning residues 1-8 (GLSRPSKR) is cleaved from the precursor. 3 disulfides stabilise this stretch: C9–C25, C16–C29, and C24–C34.

The protein belongs to the conotoxin O1 superfamily. In terms of tissue distribution, expressed by the venom duct.

The protein localises to the secreted. Probable neurotoxin with unknown target. Possibly targets ion channels. The chain is Conotoxin Cal6.1g from Californiconus californicus (California cone).